The primary structure comprises 86 residues: RNA-binding protein Hfq (86 aa).

The 60-residue stretch at 9-68 (DIFLNVLRRERIQVSIYLFNGIKLQGHIESFDQFVIVLKNTISQMVYKHAVSTIVPSKFV) folds into the Sm domain.

The protein belongs to the Hfq family. Homohexamer.

Functionally, RNA chaperone that binds small regulatory RNA (sRNAs) and mRNAs to facilitate mRNA translational regulation in response to envelope stress, environmental stress and changes in metabolite concentrations. Also binds with high specificity to tRNAs. In Baumannia cicadellinicola subsp. Homalodisca coagulata, this protein is RNA-binding protein Hfq.